A 1068-amino-acid chain; its full sequence is Focal adhesion kinase 1 (1068 aa).

Positions 1 to 26 are disordered; it reads MAAAYLDPNLNHNPSTNAKSRLSTGM. Polar residues predominate over residues 10–23; it reads LNHNPSTNAKSRLS. The region spanning 35–355 is the FERM domain; sequence RVLRVFHYFE…GYCRLVSGAS (321 aa). Phosphotyrosine occurs at positions 403 and 413. In terms of domain architecture, Protein kinase spans 435–693; it reads IELGRCIGEG…ELKAQLSTIL (259 aa). ATP-binding positions include 441 to 447, lysine 467, and 513 to 515; these read IGEGQFG and ELC. Aspartate 559 serves as the catalytic Proton acceptor. A phosphotyrosine; by autocatalysis mark is found at tyrosine 589 and tyrosine 590. Residues 699–710 show a composition bias toward basic and acidic residues; it reads QQEERMRMESRR. 2 disordered regions span residues 699–750 and 869–912; these read QQEE…QHMM and GNQH…DGYN. 2 positions are modified to phosphotyrosine: tyrosine 874 and tyrosine 941.

It belongs to the protein kinase superfamily. Tyr protein kinase family. FAK subfamily. Phosphorylated on tyrosine residues; phosphorylated kinase is first detected during gastrulation, suggesting that tyrosine phosphorylation is developmentally regulated.

Its subcellular location is the cell junction. The protein localises to the focal adhesion. It is found in the cell membrane. The protein resides in the cytoplasm. It localises to the cytoskeleton. Its subcellular location is the cilium basal body. The enzyme catalyses L-tyrosyl-[protein] + ATP = O-phospho-L-tyrosyl-[protein] + ADP + H(+). Its function is as follows. Non-receptor protein-tyrosine kinase implicated in signaling pathways involved in cell motility, proliferation and apoptosis. Activated by tyrosine-phosphorylation in response to either integrin clustering induced by cell adhesion or antibody cross-linking, or via G-protein coupled receptor (GPCR) occupancy by ligands such as bombesin or lysophosphatidic acid, or via LDL receptor occupancy. Microtubule-induced dephosphorylation at Tyr-397 is crucial for the induction of focal adhesion disassembly. The polypeptide is Focal adhesion kinase 1 (ptk2) (Xenopus laevis (African clawed frog)).